Reading from the N-terminus, the 459-residue chain is Cobyrinate a,c-diamide synthase (459 aa).

The GATase cobBQ-type domain occupies 249 to 446 (RIGMAFDEAF…VHTHFASRPG (198 aa)). The active-site Nucleophile is Cys332.

It belongs to the CobB/CbiA family. Requires Mg(2+) as cofactor.

It catalyses the reaction cob(II)yrinate + 2 L-glutamine + 2 ATP + 2 H2O = cob(II)yrinate a,c diamide + 2 L-glutamate + 2 ADP + 2 phosphate + 2 H(+). It functions in the pathway cofactor biosynthesis; adenosylcobalamin biosynthesis; cob(II)yrinate a,c-diamide from sirohydrochlorin (anaerobic route): step 10/10. Its function is as follows. Catalyzes the ATP-dependent amidation of the two carboxylate groups at positions a and c of cobyrinate, using either L-glutamine or ammonia as the nitrogen source. The chain is Cobyrinate a,c-diamide synthase from Syntrophotalea carbinolica (strain DSM 2380 / NBRC 103641 / GraBd1) (Pelobacter carbinolicus).